The following is a 177-amino-acid chain: Bifunctional protein PyrR (177 aa).

Residues 99 to 111 (VVLVDDVLFTGRT) carry the PRPP-binding motif.

It belongs to the purine/pyrimidine phosphoribosyltransferase family. PyrR subfamily.

The enzyme catalyses UMP + diphosphate = 5-phospho-alpha-D-ribose 1-diphosphate + uracil. Functionally, regulates the transcription of the pyrimidine nucleotide (pyr) operon in response to exogenous pyrimidines. Also displays a weak uracil phosphoribosyltransferase activity which is not physiologically significant. This chain is Bifunctional protein PyrR, found in Geobacter sp. (strain M21).